The primary structure comprises 347 residues: Homeobox protein knotted-1-like 9 (347 aa).

Positions 1–17 (MESFASLAGGGSSSTTA) are enriched in low complexity. Disordered regions lie at residues 1-36 (MESF…PPPL), 122-145 (QQLD…DVPD), and 179-206 (DSNC…DPSD). Positions 22–36 (LIPPENPDRISPPPL) are enriched in pro residues. Residues 188-203 (SEEEQDTSCPEAEEID) show a composition bias toward acidic residues. In terms of domain architecture, ELK spans 208–228 (QLKHQLLMKYGGSLGDLRQAF). Residues 229–293 (SKRTKKGKLP…NQRKRHWKPT (65 aa)) constitute a DNA-binding region (homeobox; TALE-type).

This sequence belongs to the TALE/KNOX homeobox family.

The protein resides in the nucleus. This Oryza sativa subsp. japonica (Rice) protein is Homeobox protein knotted-1-like 9.